The primary structure comprises 136 residues: Large ribosomal subunit protein uL16 (136 aa).

This sequence belongs to the universal ribosomal protein uL16 family. As to quaternary structure, part of the 50S ribosomal subunit.

In terms of biological role, binds 23S rRNA and is also seen to make contacts with the A and possibly P site tRNAs. The polypeptide is Large ribosomal subunit protein uL16 (Citrobacter koseri (strain ATCC BAA-895 / CDC 4225-83 / SGSC4696)).